The chain runs to 101 residues: Defensin-like protein 222 (101 aa).

Positions 1–21 are cleaved as a signal peptide; that stretch reads MRTIVLFSTLMILVLSCMSNA. 3 cysteine pairs are disulfide-bonded: cysteine 68-cysteine 85, cysteine 71-cysteine 90, and cysteine 75-cysteine 92.

The protein belongs to the DEFL family.

It localises to the secreted. The polypeptide is Defensin-like protein 222 (Arabidopsis thaliana (Mouse-ear cress)).